A 172-amino-acid chain; its full sequence is Protein LHCP TRANSLOCATION DEFECT (172 aa).

The N-terminal 28 residues, 1–28, are a transit peptide targeting the chloroplast; that stretch reads MASIPCTFQLSARASSASAAAAARRSPR. The ANK repeat unit spans residues 114–146; the sequence is PVDILLMLAASEGDKPKLEELLRAGAKYDVKDV.

It localises to the plastid. The protein resides in the chloroplast. Involved in the import of light-harvesting complex proteins (LHCP) and subsequent routing of these proteins to the chloroplast signal recognition particle (SRP) pathway. This chain is Protein LHCP TRANSLOCATION DEFECT (LTD), found in Oryza sativa subsp. indica (Rice).